We begin with the raw amino-acid sequence, 1167 residues long: White collar 1 protein (1167 aa).

Disordered regions lie at residues 1–91 and 307–355; these read MNNN…MSGG and STPA…GASQ. Over residues 21 to 57 the composition is skewed to low complexity; sequence QHQQQQQQQQQQQQQQQQQQQQQQQQQQQQHQHQQQQ. Composition is skewed to polar residues over residues 70–91 and 307–325; these read TPPT…MSGG and STPA…TQTI. The segment covering 335 to 348 has biased composition (low complexity); that stretch reads VTNAPTPAPFTSTP. A PAS 1 domain is found at 381–452; the sequence is KLKLGAVDMS…KREFVENNAV (72 aa). Position 428 is an S-4a-FMN cysteine (Cys-428). Residues 469–508 form the PAC 1 domain; the sequence is LINYRKGGKPFLNLLTMIPIPWDTEEIRYFIGFQIDLVEC. The PAS 2 domain maps to 574–644; the sequence is KQSWDKMLLE…RELKEAQQHT (71 aa). One can recognise a PAC 2 domain in the interval 650–691; sequence FRIRRKNSGYTWFESHGTLFNEQGKGRKCIILVGRKRPVFAL. The region spanning 693–763 is the PAS 3 domain; it reads RKDLELNGGI…RTIEKARKGK (71 aa). A compositionally biased stretch (low complexity) spans 849-861; the sequence is MSKSGSSDSTGAM. Disordered regions lie at residues 849–872, 918–952, 966–1047, and 1060–1167; these read MSKS…GPGQ, KKKR…PSGN, QTGR…TGST, and VNAL…GLSV. Residues 934-959 form a GATA-type zinc finger; sequence CANCHTRNTPEWRRGPSGNRDLCNSC. Residues 968–977 are compositionally biased toward polar residues; it reads GRVSPRTSSR. Residues 986–995 are compositionally biased toward low complexity; that stretch reads KKSNSPSHSS. A compositionally biased stretch (polar residues) spans 1004-1033; sequence DSPSTTTATKNSPSLRGSSTTAPGTITTDS. Composition is skewed to low complexity over residues 1036–1047 and 1104–1128; these read AVASSASGTGST and QHQQ…QQHQ.

Heterodimer of wc-1 and wc-2. Post-translationally, FMN binds covalently to cysteine after exposure to blue light and is reversed in the dark.

The protein resides in the nucleus. Functionally, may function as a transcription factor involved in light regulation. Binds and affects blue light regulation of the al-3 gene. Wc-1 and wc-2 proteins interact via homologous PAS domains, bind to promoters of light regulated genes such as frq, and activate transcription. In Neurospora crassa (strain ATCC 24698 / 74-OR23-1A / CBS 708.71 / DSM 1257 / FGSC 987), this protein is White collar 1 protein (wc-1).